Consider the following 338-residue polypeptide: Ketol-acid reductoisomerase (NADP(+)) (338 aa).

The region spanning 1–181 (MQIYYDKDAD…GGGRAGIIET (181 aa)) is the KARI N-terminal Rossmann domain. NADP(+)-binding positions include 24-27 (YGSQ), Arg47, Ser50, Ser52, and 82-85 (DEHQ). The active site involves His107. Residue Gly133 coordinates NADP(+). Positions 182–327 (TFREETETDL…ARLRDMMPWI (146 aa)) constitute a KARI C-terminal knotted domain. The Mg(2+) site is built by Asp190, Glu194, Glu226, and Glu230. Ser251 lines the substrate pocket.

It belongs to the ketol-acid reductoisomerase family. Requires Mg(2+) as cofactor.

The enzyme catalyses (2R)-2,3-dihydroxy-3-methylbutanoate + NADP(+) = (2S)-2-acetolactate + NADPH + H(+). It catalyses the reaction (2R,3R)-2,3-dihydroxy-3-methylpentanoate + NADP(+) = (S)-2-ethyl-2-hydroxy-3-oxobutanoate + NADPH + H(+). Its pathway is amino-acid biosynthesis; L-isoleucine biosynthesis; L-isoleucine from 2-oxobutanoate: step 2/4. The protein operates within amino-acid biosynthesis; L-valine biosynthesis; L-valine from pyruvate: step 2/4. Its function is as follows. Involved in the biosynthesis of branched-chain amino acids (BCAA). Catalyzes an alkyl-migration followed by a ketol-acid reduction of (S)-2-acetolactate (S2AL) to yield (R)-2,3-dihydroxy-isovalerate. In the isomerase reaction, S2AL is rearranged via a Mg-dependent methyl migration to produce 3-hydroxy-3-methyl-2-ketobutyrate (HMKB). In the reductase reaction, this 2-ketoacid undergoes a metal-dependent reduction by NADPH to yield (R)-2,3-dihydroxy-isovalerate. The polypeptide is Ketol-acid reductoisomerase (NADP(+)) (Methylococcus capsulatus (strain ATCC 33009 / NCIMB 11132 / Bath)).